An 829-amino-acid polypeptide reads, in one-letter code: FAST kinase domain-containing protein 1, mitochondrial (829 aa).

N6-acetyllysine is present on Lys346. The 61-residue stretch at 761–821 folds into the RAP domain; that stretch reads IAIELLDVRA…KDARMDYLRE (61 aa).

The protein belongs to the FAST kinase family. Expression detected in spleen, testis, colon, heart, smooth muscle, kidney, brain, lung, liver, brown and white adipose tissue with highest expression in heart and brown adipose tissue.

The protein localises to the mitochondrion. In terms of biological role, involved in the down-regulation of mitochondrial MT-ND3 mRNA levels which leads to decreased respiratory complex I abundance and activity. This Mus musculus (Mouse) protein is FAST kinase domain-containing protein 1, mitochondrial (Fastkd1).